A 338-amino-acid polypeptide reads, in one-letter code: UDP-3-O-acylglucosamine N-acyltransferase (338 aa).

Catalysis depends on His243, which acts as the Proton acceptor.

This sequence belongs to the transferase hexapeptide repeat family. LpxD subfamily. As to quaternary structure, homotrimer.

It catalyses the reaction a UDP-3-O-[(3R)-3-hydroxyacyl]-alpha-D-glucosamine + a (3R)-hydroxyacyl-[ACP] = a UDP-2-N,3-O-bis[(3R)-3-hydroxyacyl]-alpha-D-glucosamine + holo-[ACP] + H(+). The protein operates within bacterial outer membrane biogenesis; LPS lipid A biosynthesis. Catalyzes the N-acylation of UDP-3-O-acylglucosamine using 3-hydroxyacyl-ACP as the acyl donor. Is involved in the biosynthesis of lipid A, a phosphorylated glycolipid that anchors the lipopolysaccharide to the outer membrane of the cell. The chain is UDP-3-O-acylglucosamine N-acyltransferase from Amoebophilus asiaticus (strain 5a2).